The following is a 1134-amino-acid chain: DENN domain-containing protein 2B (1134 aa).

Residues 1–13 (MTMTANKNSSITH) show a composition bias toward polar residues. The disordered stretch occupies residues 1-90 (MTMTANKNSS…DPSPETSPPI (90 aa)). Residues serine 30 and serine 32 each carry the phosphoserine modification. Residues 32–43 (SPPPVLYPPRSP) are compositionally biased toward pro residues. The residue at position 228 (threonine 228) is a Phosphothreonine. Residue serine 230 is modified to Phosphoserine. 2 disordered regions span residues 233–273 (SYPE…GIRK) and 289–571 (LKEQ…KRHS). Residues 249–259 (SLYRLEKRPGR) are compositionally biased toward basic and acidic residues. Residues 315 to 348 (GTLGTLEEPTGTASVSPSSRAGGVAGVAGEAGPP) show a composition bias toward low complexity. The residue at position 361 (threonine 361) is a Phosphothreonine. Residue serine 365 is modified to Phosphoserine. The segment covering 370–385 (LLPPKSSPDPAVNPVP) has biased composition (pro residues). Residues 389-399 (RTFEYEADKNP) are compositionally biased toward basic and acidic residues. Pro residues predominate over residues 406–428 (GLPPSPTPAAPPPLPSTPAPPVT). The segment covering 429-443 (RRPKKDMRGHRKSQN) has biased composition (basic residues). Residues 453-478 (SSLQSLYPSSPTENGTESQPKFGSKS) are compositionally biased toward polar residues. Threonine 479 is subject to Phosphothreonine. 2 stretches are compositionally biased toward polar residues: residues 511 to 521 (KSQQLSENSLD) and 542 to 555 (SLKS…SGNW). Residue serine 542 is modified to Phosphoserine. Basic residues predominate over residues 559–570 (KSHRLPRLPKRH). A phosphoserine mark is found at serine 571 and serine 619. Residues 633–658 (LSMSSLETASLRDENSESESDSDDRF) are disordered. A uDENN domain is found at 695 to 843 (EYFVVVSLKK…PFPAPGKTIK (149 aa)). Positions 865–998 (RLEHVDFECL…LQAALEQALE (134 aa)) constitute a cDENN domain. The dDENN domain occupies 1000–1093 (KSELISQDSD…QDRELRKCRA (94 aa)).

Interacts with ITSN1 and GRB2. Isoform 1 interacts with the SH3 domain of ABL1. Phosphorylated. Phosphorylation decreases ITSN1 binding.

The protein localises to the cytoplasm. Its subcellular location is the cell cortex. It localises to the cell membrane. It is found in the recycling endosome. Functionally, may be involved in cytoskeletal organization and tumorogenicity. Seems to be involved in a signaling transduction pathway leading to activation of MAPK1/ERK2. Plays a role in EGFR trafficking from recycling endosomes back to the cell membrane. In terms of biological role, guanine nucleotide exchange factor (GEF) which may activate RAB9A and RAB9B. Promotes the exchange of GDP to GTP, converting inactive GDP-bound Rab proteins into their active GTP-bound form. May block ERK2 activation stimulated by ABL1. May alter cell morphology and cell growth. The protein is DENN domain-containing protein 2B (Dennd2b) of Mus musculus (Mouse).